Here is a 387-residue protein sequence, read N- to C-terminus: S-adenosylmethionine synthase (387 aa).

Position 15 (histidine 15) interacts with ATP. Aspartate 17 is a Mg(2+) binding site. Glutamate 43 is a binding site for K(+). Residues glutamate 56 and glutamine 99 each contribute to the L-methionine site. A flexible loop region spans residues 99-109 (QSPDIAQGVNN). Residues 166-168 (DAK), 232-233 (RF), aspartate 241, 247-248 (RK), alanine 264, and lysine 268 each bind ATP. Aspartate 241 contributes to the L-methionine binding site. Lysine 272 provides a ligand contact to L-methionine.

It belongs to the AdoMet synthase family. In terms of assembly, homotetramer; dimer of dimers. The cofactor is Mg(2+). Requires K(+) as cofactor.

The protein localises to the cytoplasm. The catalysed reaction is L-methionine + ATP + H2O = S-adenosyl-L-methionine + phosphate + diphosphate. The protein operates within amino-acid biosynthesis; S-adenosyl-L-methionine biosynthesis; S-adenosyl-L-methionine from L-methionine: step 1/1. Catalyzes the formation of S-adenosylmethionine (AdoMet) from methionine and ATP. The overall synthetic reaction is composed of two sequential steps, AdoMet formation and the subsequent tripolyphosphate hydrolysis which occurs prior to release of AdoMet from the enzyme. This chain is S-adenosylmethionine synthase, found in Methylobacillus flagellatus (strain ATCC 51484 / DSM 6875 / VKM B-1610 / KT).